The following is a 155-amino-acid chain: Interleukin-2 (155 aa).

The first 20 residues, 1–20 (MYKIQLLSCIALTLALVANG), serve as a signal peptide directing secretion. Threonine 23 carries O-linked (GalNAc...) threonine glycosylation. A disulfide bridge links cysteine 79 with cysteine 127.

This sequence belongs to the IL-2 family.

Its subcellular location is the secreted. In terms of biological role, cytokine produced by activated CD4-positive helper T-cells and to a lesser extend activated CD8-positive T-cells and natural killer (NK) cells that plays pivotal roles in the immune response and tolerance. Binds to a receptor complex composed of either the high-affinity trimeric IL-2R (IL2RA/CD25, IL2RB/CD122 and IL2RG/CD132) or the low-affinity dimeric IL-2R (IL2RB and IL2RG). Interaction with the receptor leads to oligomerization and conformation changes in the IL-2R subunits resulting in downstream signaling starting with phosphorylation of JAK1 and JAK3. In turn, JAK1 and JAK3 phosphorylate the receptor to form a docking site leading to the phosphorylation of several substrates including STAT5. This process leads to activation of several pathways including STAT, phosphoinositide-3-kinase/PI3K and mitogen-activated protein kinase/MAPK pathways. Functions as a T-cell growth factor and can increase NK-cell cytolytic activity as well. Promotes strong proliferation of activated B-cells and subsequently immunoglobulin production. Plays a pivotal role in regulating the adaptive immune system by controlling the survival and proliferation of regulatory T-cells, which are required for the maintenance of immune tolerance. Moreover, participates in the differentiation and homeostasis of effector T-cell subsets, including Th1, Th2, Th17 as well as memory CD8-positive T-cells. The polypeptide is Interleukin-2 (IL2) (Boselaphus tragocamelus (Nilgai)).